The chain runs to 295 residues: Nucleotide-binding protein MCA0739 (295 aa).

8 to 15 (GFSGSGKS) provides a ligand contact to ATP. Position 60–63 (60–63 (DARN)) interacts with GTP.

Belongs to the RapZ-like family.

Its function is as follows. Displays ATPase and GTPase activities. In Methylococcus capsulatus (strain ATCC 33009 / NCIMB 11132 / Bath), this protein is Nucleotide-binding protein MCA0739.